Consider the following 71-residue polypeptide: UPF0352 protein Spea_1764 (71 aa).

This sequence belongs to the UPF0352 family.

The protein is UPF0352 protein Spea_1764 of Shewanella pealeana (strain ATCC 700345 / ANG-SQ1).